We begin with the raw amino-acid sequence, 223 residues long: RNA-free ribonuclease P (223 aa).

This sequence belongs to the HARP family.

It carries out the reaction Endonucleolytic cleavage of RNA, removing 5'-extranucleotides from tRNA precursor.. In terms of biological role, RNA-free RNase P that catalyzes the removal of the 5'-leader sequence from pre-tRNA to produce the mature 5'-terminus. In Methanococcus maripaludis (strain C5 / ATCC BAA-1333), this protein is RNA-free ribonuclease P.